The chain runs to 92 residues: Sperm-specific protein Phi-1 (92 aa).

The segment at 1–92 (MPSPTRRSSK…RVRAKKKKKK (92 aa)) is disordered. Basic residues-rich tracts occupy residues 7–19 (RSSK…RSRS) and 29–92 (AAKR…KKKK).

In terms of tissue distribution, sperm.

Its subcellular location is the nucleus. It is found in the chromosome. In terms of biological role, involved in nuclear basic protein transition: histones are replaced by spermatid specific proteins which are themselves replaced by protamines in late spermatids. The sequence is that of Sperm-specific protein Phi-1 from Mytilus edulis (Blue mussel).